The following is a 1195-amino-acid chain: EST/SMG-like protein 2 (1195 aa).

Composition is skewed to polar residues over residues 1 to 10, 18 to 35, and 55 to 68; these read MPETSVQNPL, TRSM…SATP, and VLNP…SNSV. 4 disordered regions span residues 1–38, 55–130, 179–268, and 610–643; these read MPET…PSFP, VLNP…VGIT, SKSE…PASN, and DKKE…DEIM. 2 stretches are compositionally biased toward basic and acidic residues: residues 83 to 109 and 197 to 208; these read RFSD…EKNP and INDKDNSARDQD. Low complexity-rich tracts occupy residues 210–252 and 619–629; these read NNSG…NNSD and NNDSSVTESST. A PINc domain is found at 1025–1164; it reads TYFVFDATSW…LISDDDAMKK (140 aa).

As to quaternary structure, transiently interacts with PEX14.

It is found in the cytoplasm. The protein resides in the nucleus. It localises to the peroxisome. May be involved in the regulation of gene expression responses of environment-sensing pathways. The protein is EST/SMG-like protein 2 of Saccharomyces cerevisiae (strain ATCC 204508 / S288c) (Baker's yeast).